Consider the following 84-residue polypeptide: Small ribosomal subunit protein uS17 (84 aa).

It belongs to the universal ribosomal protein uS17 family. Part of the 30S ribosomal subunit.

Functionally, one of the primary rRNA binding proteins, it binds specifically to the 5'-end of 16S ribosomal RNA. The chain is Small ribosomal subunit protein uS17 from Salmonella typhi.